The sequence spans 146 residues: Transcriptional regulator MraZ (146 aa).

2 SpoVT-AbrB domains span residues 5–52 and 81–124; these read SAAL…PRAE and AAEI…KEES.

It belongs to the MraZ family. In terms of assembly, forms oligomers.

It is found in the cytoplasm. The protein localises to the nucleoid. In Alcanivorax borkumensis (strain ATCC 700651 / DSM 11573 / NCIMB 13689 / SK2), this protein is Transcriptional regulator MraZ.